Here is a 581-residue protein sequence, read N- to C-terminus: Fibrous sheath-interacting protein 1 (581 aa).

The disordered stretch occupies residues 1–77 (MDIIKGNLDG…SNDDKRESCS (77 aa)). Residues 14-30 (PASNSRIRPGSRSSNAS) are compositionally biased toward polar residues. The span at 52–77 (GKEDHSESSNTENRRTSNDDKRESCS) shows a compositional bias: basic and acidic residues. Serine 87 is subject to Phosphoserine. Residues 103-153 (SDEHKLEELDSQLQDAIQKMKKLDKILAKTQRREKEIKKQGLEMRIKLWEE) are a coiled coil. 2 disordered regions span residues 338 to 370 (SSFSPRLENQNNQEPDLDGEKNMEVTPGEKVLR) and 553 to 581 (DQHLKLNSPEKTKADEQETKDAAEECKEP).

It belongs to the FSIP1 family.

This is Fibrous sheath-interacting protein 1 (FSIP1) from Macaca fascicularis (Crab-eating macaque).